The primary structure comprises 722 residues: Polyribonucleotide nucleotidyltransferase (722 aa).

2 residues coordinate Mg(2+): Asp495 and Asp501. Positions 561 to 620 (PRLYVMKINPEKIREVIGKGGETIRSITKDTGCEINIEEDGTITIASVSSEGAEAAKKRI) constitute a KH domain. Residues 630–700 (GKVYEGTVVK…DRGRIRLSIK (71 aa)) form the S1 motif domain.

The protein belongs to the polyribonucleotide nucleotidyltransferase family. The cofactor is Mg(2+).

It is found in the cytoplasm. The enzyme catalyses RNA(n+1) + phosphate = RNA(n) + a ribonucleoside 5'-diphosphate. Its function is as follows. Involved in mRNA degradation. Catalyzes the phosphorolysis of single-stranded polyribonucleotides processively in the 3'- to 5'-direction. This chain is Polyribonucleotide nucleotidyltransferase, found in Chromobacterium violaceum (strain ATCC 12472 / DSM 30191 / JCM 1249 / CCUG 213 / NBRC 12614 / NCIMB 9131 / NCTC 9757 / MK).